The chain runs to 199 residues: Prolactin (199 aa).

Cysteine 4 and cysteine 11 form a disulfide bridge. Residues serine 26, serine 34, and serine 90 each carry the phosphoserine modification. Cystine bridges form between cysteine 58–cysteine 174 and cysteine 191–cysteine 199.

It belongs to the somatotropin/prolactin family. As to quaternary structure, interacts with PRLR.

It localises to the secreted. Functionally, prolactin acts primarily on the mammary gland by promoting lactation. The sequence is that of Prolactin (PRL) from Balaenoptera borealis (Sei whale).